A 238-amino-acid chain; its full sequence is Probable transcriptional regulatory protein SERP0322 (238 aa).

Belongs to the TACO1 family. YeeN subfamily.

It localises to the cytoplasm. The protein is Probable transcriptional regulatory protein SERP0322 of Staphylococcus epidermidis (strain ATCC 35984 / DSM 28319 / BCRC 17069 / CCUG 31568 / BM 3577 / RP62A).